The sequence spans 145 residues: Large ribosomal subunit protein bL9 (145 aa).

This sequence belongs to the bacterial ribosomal protein bL9 family.

Functionally, binds to the 23S rRNA. This Mesomycoplasma hyopneumoniae (strain J / ATCC 25934 / NCTC 10110) (Mycoplasma hyopneumoniae) protein is Large ribosomal subunit protein bL9.